The following is a 220-amino-acid chain: Large ribosomal subunit protein eL15 (220 aa).

It belongs to the eukaryotic ribosomal protein eL15 family.

The chain is Large ribosomal subunit protein eL15 from Staphylothermus marinus (strain ATCC 43588 / DSM 3639 / JCM 9404 / F1).